The chain runs to 389 residues: Succinate--CoA ligase [ADP-forming] subunit beta (389 aa).

The region spanning 9 to 244 is the ATP-grasp domain; it reads KQLFADYGLP…ETQEDPREVE (236 aa). Residues lysine 46, 53–55, glutamate 99, glycine 102, and glutamate 107 each bind ATP; that span reads GRG. Positions 199 and 213 each coordinate Mg(2+). Substrate-binding positions include asparagine 264 and 321-323; that span reads GIV.

The protein belongs to the succinate/malate CoA ligase beta subunit family. As to quaternary structure, heterotetramer of two alpha and two beta subunits. The cofactor is Mg(2+).

The enzyme catalyses succinate + ATP + CoA = succinyl-CoA + ADP + phosphate. The catalysed reaction is GTP + succinate + CoA = succinyl-CoA + GDP + phosphate. The protein operates within carbohydrate metabolism; tricarboxylic acid cycle; succinate from succinyl-CoA (ligase route): step 1/1. Succinyl-CoA synthetase functions in the citric acid cycle (TCA), coupling the hydrolysis of succinyl-CoA to the synthesis of either ATP or GTP and thus represents the only step of substrate-level phosphorylation in the TCA. The beta subunit provides nucleotide specificity of the enzyme and binds the substrate succinate, while the binding sites for coenzyme A and phosphate are found in the alpha subunit. The chain is Succinate--CoA ligase [ADP-forming] subunit beta from Tolumonas auensis (strain DSM 9187 / NBRC 110442 / TA 4).